The primary structure comprises 726 residues: Catalase-peroxidase (726 aa).

Residues 1 to 33 (MSTSDDIHNTTATGKCPFHQGGHDQSAGAGTTT) are disordered. A cross-link (tryptophyl-tyrosyl-methioninium (Trp-Tyr) (with M-252)) is located at residues 105–226 (WHGAGTYRSI…LGATEMGLIY (122 aa)). The active-site Proton acceptor is histidine 106. The tryptophyl-tyrosyl-methioninium (Tyr-Met) (with W-105) cross-link spans 226–252 (YVNPEGPDHSGEPLSAAAAIRATFGNM). Residue histidine 267 participates in heme b binding.

It belongs to the peroxidase family. Peroxidase/catalase subfamily. Homodimer or homotetramer. Requires heme b as cofactor. Formation of the three residue Trp-Tyr-Met cross-link is important for the catalase, but not the peroxidase activity of the enzyme.

The catalysed reaction is H2O2 + AH2 = A + 2 H2O. It carries out the reaction 2 H2O2 = O2 + 2 H2O. In terms of biological role, bifunctional enzyme with both catalase and broad-spectrum peroxidase activity. The sequence is that of Catalase-peroxidase from Shigella boydii serotype 18 (strain CDC 3083-94 / BS512).